Here is a 350-residue protein sequence, read N- to C-terminus: Twinfilin-1 (350 aa).

ADF-H domains are found at residues 4–139 (QTGI…KYLA) and 177–313 (GIAF…EEVH). Positions 316–350 (QHAHKQNFAKPKGPAGKRGIRRLIRGPAEAETAND) are disordered.

The protein belongs to the actin-binding proteins ADF family. Twinfilin subfamily. Interacts with G-actin; ADP-actin form.

The protein localises to the cytoplasm. It localises to the cytoskeleton. In terms of biological role, actin-binding protein involved in motile and morphological processes. Inhibits actin polymerization, likely by sequestering G-actin. The chain is Twinfilin-1 (twf1) from Xenopus tropicalis (Western clawed frog).